The sequence spans 355 residues: Class E basic helix-loop-helix protein 22 (355 aa).

Disordered stretches follow at residues 34 to 90 (AFRS…GGGG) and 128 to 215 (GRGS…KEQK). 2 stretches are compositionally biased toward gly residues: residues 81-90 (GGGGASGGGG) and 185-207 (GGSG…GGGS). The bHLH domain occupies 216–270 (ALRLNINARERRRMHDLNDALDELRAVIPYAHSPSVRKLSKIATLLLAKNYILMQ).

As to quaternary structure, interacts with PRDM8. As to expression, brain-specific, with the highest expression in the cerebellum.

It localises to the nucleus. Its function is as follows. Inhibits DNA binding of TCF3/E47 homodimers and TCF3 (E47)/NEUROD1 heterodimers and acts as a strong repressor of Neurod1 and Myod-responsive genes, probably by heterodimerization with class a basic helix-loop-helix factors. Despite the presence of an intact basic domain, does not bind to DNA. In the brain, may function as an area-specific transcription factor that regulates the postmitotic acquisition of area identities and elucidate the genetic hierarchy between progenitors and postmitotic neurons driving neocortical arealization. May be required for the survival of a specific population of inhibitory neurons in the superficial laminae of the spinal cord dorsal horn that may regulate pruritis. Seems to play a crucial role in the retinogenesis, in the specification of amacrine and bipolar subtypes. Forms with PRDM8 a transcriptional repressor complex controlling genes involved in neural development and neuronal differentiation. The polypeptide is Class E basic helix-loop-helix protein 22 (Bhlhe22) (Mus musculus (Mouse)).